A 389-amino-acid chain; its full sequence is Chalcone synthase 2 (389 aa).

Cys-164 is a catalytic residue.

It belongs to the thiolase-like superfamily. Chalcone/stilbene synthases family.

The enzyme catalyses (E)-4-coumaroyl-CoA + 3 malonyl-CoA + 3 H(+) = 2',4,4',6'-tetrahydroxychalcone + 3 CO2 + 4 CoA. Its pathway is secondary metabolite biosynthesis; flavonoid biosynthesis. Its function is as follows. The primary product of this enzyme is 4,2',4',6'-tetrahydroxychalcone (also termed naringenin-chalcone or chalcone) which can under specific conditions spontaneously isomerize into naringenin. The chain is Chalcone synthase 2 (CHS2) from Trifolium subterraneum (Subterranean clover).